A 360-amino-acid chain; its full sequence is Ribosomal RNA large subunit methyltransferase M (360 aa).

Residues Ser187, 220-223 (CPGG), Asp239, Asp259, and Asp276 contribute to the S-adenosyl-L-methionine site. The Proton acceptor role is filled by Lys305.

It belongs to the class I-like SAM-binding methyltransferase superfamily. RNA methyltransferase RlmE family. RlmM subfamily. In terms of assembly, monomer.

The protein resides in the cytoplasm. The enzyme catalyses cytidine(2498) in 23S rRNA + S-adenosyl-L-methionine = 2'-O-methylcytidine(2498) in 23S rRNA + S-adenosyl-L-homocysteine + H(+). Catalyzes the 2'-O-methylation at nucleotide C2498 in 23S rRNA. The sequence is that of Ribosomal RNA large subunit methyltransferase M from Shewanella halifaxensis (strain HAW-EB4).